The primary structure comprises 30 residues: 80 kDa carcinoembryonic antigen-binding protein (30 aa).

As to quaternary structure, binds to carcinoembryonic antigen (CEA). The N-terminus is blocked.

The protein resides in the cell membrane. Functionally, may play a role in the development of hepatic metastases from colorectal cancers. This is 80 kDa carcinoembryonic antigen-binding protein from Rattus norvegicus (Rat).